Here is a 115-residue protein sequence, read N- to C-terminus: Phosphoribosyl-ATP pyrophosphatase (115 aa).

This sequence belongs to the PRA-PH family.

The protein localises to the cytoplasm. The enzyme catalyses 1-(5-phospho-beta-D-ribosyl)-ATP + H2O = 1-(5-phospho-beta-D-ribosyl)-5'-AMP + diphosphate + H(+). It participates in amino-acid biosynthesis; L-histidine biosynthesis; L-histidine from 5-phospho-alpha-D-ribose 1-diphosphate: step 2/9. The chain is Phosphoribosyl-ATP pyrophosphatase from Bordetella bronchiseptica (strain ATCC BAA-588 / NCTC 13252 / RB50) (Alcaligenes bronchisepticus).